A 381-amino-acid polypeptide reads, in one-letter code: Putative 8-amino-7-oxononanoate synthase (381 aa).

Residue Arg-20 coordinates substrate. 107-108 (GY) is a binding site for pyridoxal 5'-phosphate. Substrate is bound at residue His-132. Residues Ser-180, 205 to 208 (DEAH), and 236 to 239 (TLSK) each bind pyridoxal 5'-phosphate. Lys-239 is modified (N6-(pyridoxal phosphate)lysine). Position 351 (Thr-351) interacts with substrate.

The protein belongs to the class-II pyridoxal-phosphate-dependent aminotransferase family. BioF subfamily. As to quaternary structure, homodimer. The cofactor is pyridoxal 5'-phosphate.

It catalyses the reaction 6-carboxyhexanoyl-[ACP] + L-alanine + H(+) = (8S)-8-amino-7-oxononanoate + holo-[ACP] + CO2. Its pathway is cofactor biosynthesis; biotin biosynthesis. Catalyzes the decarboxylative condensation of pimeloyl-[acyl-carrier protein] and L-alanine to produce 8-amino-7-oxononanoate (AON), [acyl-carrier protein], and carbon dioxide. In Rippkaea orientalis (strain PCC 8801 / RF-1) (Cyanothece sp. (strain PCC 8801)), this protein is Putative 8-amino-7-oxononanoate synthase (bioF).